Here is a 486-residue protein sequence, read N- to C-terminus: FAD-dependent oxidoreductase domain-containing protein 1 (486 aa).

The helical transmembrane segment at 66 to 82 threads the bilayer; the sequence is VVIVGGGVLGLSVAYWL.

Associates with components of the mitochondrial respiratory chain complex I. It depends on FAD as a cofactor.

It localises to the mitochondrion inner membrane. Its function is as follows. Required for the assembly of the mitochondrial membrane respiratory chain NADH dehydrogenase (Complex I). Involved in mid-late stages of complex I assembly. The sequence is that of FAD-dependent oxidoreductase domain-containing protein 1 (FOXRED1) from Bos taurus (Bovine).